The chain runs to 356 residues: D-alanine--D-alanine ligase (356 aa).

One can recognise an ATP-grasp domain in the interval 134–339 (KQLFEHRGLP…YSDLITKLID (206 aa)). 167 to 222 (KDKLTYPVFVKPANLGSSVGISKCNNEDELKSGIEEAFQFDRKLVIEQGINAREVE) contributes to the ATP binding site. Residues D293, E306, and N308 each contribute to the Mg(2+) site.

This sequence belongs to the D-alanine--D-alanine ligase family. Mg(2+) is required as a cofactor. It depends on Mn(2+) as a cofactor.

The protein localises to the cytoplasm. The enzyme catalyses 2 D-alanine + ATP = D-alanyl-D-alanine + ADP + phosphate + H(+). It functions in the pathway cell wall biogenesis; peptidoglycan biosynthesis. Functionally, cell wall formation. The chain is D-alanine--D-alanine ligase from Staphylococcus haemolyticus (strain JCSC1435).